The following is a 145-amino-acid chain: Small ribosomal subunit protein uS9 (145 aa).

It belongs to the universal ribosomal protein uS9 family.

The protein resides in the cytoplasm. This chain is Small ribosomal subunit protein uS9 (RPS16), found in Gossypium hirsutum (Upland cotton).